Here is a 345-residue protein sequence, read N- to C-terminus: tRNA N6-adenosine threonylcarbamoyltransferase (345 aa).

2 residues coordinate Fe cation: His-115 and His-119. Substrate-binding positions include 137–141 (LVSGG), Asp-170, Gly-183, Asp-187, and Asn-276. Asp-306 provides a ligand contact to Fe cation.

Belongs to the KAE1 / TsaD family. It depends on Fe(2+) as a cofactor.

The protein localises to the cytoplasm. It catalyses the reaction L-threonylcarbamoyladenylate + adenosine(37) in tRNA = N(6)-L-threonylcarbamoyladenosine(37) in tRNA + AMP + H(+). Required for the formation of a threonylcarbamoyl group on adenosine at position 37 (t(6)A37) in tRNAs that read codons beginning with adenine. Is involved in the transfer of the threonylcarbamoyl moiety of threonylcarbamoyl-AMP (TC-AMP) to the N6 group of A37, together with TsaE and TsaB. TsaD likely plays a direct catalytic role in this reaction. In Pediococcus pentosaceus (strain ATCC 25745 / CCUG 21536 / LMG 10740 / 183-1w), this protein is tRNA N6-adenosine threonylcarbamoyltransferase.